The chain runs to 72 residues: Translation initiation factor IF-1 (72 aa).

Residues 1-72 enclose the S1-like domain; it reads MSKDDCIEFE…TKGRIIYRMK (72 aa).

The protein belongs to the IF-1 family. In terms of assembly, component of the 30S ribosomal translation pre-initiation complex which assembles on the 30S ribosome in the order IF-2 and IF-3, IF-1 and N-formylmethionyl-tRNA(fMet); mRNA recruitment can occur at any time during PIC assembly.

The protein localises to the cytoplasm. One of the essential components for the initiation of protein synthesis. Stabilizes the binding of IF-2 and IF-3 on the 30S subunit to which N-formylmethionyl-tRNA(fMet) subsequently binds. Helps modulate mRNA selection, yielding the 30S pre-initiation complex (PIC). Upon addition of the 50S ribosomal subunit IF-1, IF-2 and IF-3 are released leaving the mature 70S translation initiation complex. In Xylella fastidiosa (strain Temecula1 / ATCC 700964), this protein is Translation initiation factor IF-1.